The sequence spans 768 residues: P-selectin (768 aa).

Positions 1–41 are cleaved as a signal peptide; the sequence is MAGCPKGSWKPRLRSVVLGAAQLIWLSALISELVNRKKVAT. Over 42–709 the chain is Extracellular; the sequence is WTYNYSTKAY…QAGTLTIQEA (668 aa). N-linked (GlcNAc...) asparagine glycans are attached at residues Asn-45, Asn-54, and Asn-107. In terms of domain architecture, C-type lectin spans 58–158; the sequence is AFCKRHFTDL…PCFKRKRALC (101 aa). 20 disulfide bridges follow: Cys-60–Cys-158, Cys-131–Cys-150, Cys-168–Cys-183, Cys-185–Cys-194, Cys-200–Cys-244, Cys-230–Cys-257, Cys-262–Cys-306, Cys-292–Cys-319, Cys-324–Cys-368, Cys-354–Cys-381, Cys-386–Cys-430, Cys-416–Cys-443, Cys-448–Cys-492, Cys-478–Cys-505, Cys-510–Cys-554, Cys-540–Cys-567, Cys-580–Cys-624, Cys-610–Cys-637, Cys-642–Cys-686, and Cys-672–Cys-699. Ca(2+)-binding residues include Glu-121, Asn-123, and Asn-124. Asn-123 lines the a carbohydrate pocket. Residues Glu-133 and Asn-146 each contribute to the a carbohydrate site. Asn-146 and Asp-147 together coordinate Ca(2+). Positions 159–195 constitute an EGF-like domain; it reads YTASCQDMSCNSQGERIETIGSYTCSCYPGFYGPECE. 8 consecutive Sushi domains span residues 198-259, 260-321, 322-383, 384-445, 446-507, 508-569, 578-639, and 640-701; these read QECG…QCKA, VQCQ…TCEA, IACE…VCEA, LQCQ…ECQA, VSCT…MCEA, IKCP…TCKG, VRCP…VCRA, and VKCS…TCQA. N-linked (GlcNAc...) asparagine glycosylation is present at Asn-212. N-linked (GlcNAc...) asparagine glycosylation is present at Asn-347. A glycan (N-linked (GlcNAc...) asparagine) is linked at Asn-456. The N-linked (GlcNAc...) asparagine glycan is linked to Asn-603. N-linked (GlcNAc...) asparagine glycosylation is found at Asn-654, Asn-661, and Asn-679. Residues 710–733 traverse the membrane as a helical segment; that stretch reads LTYLGGALASTSGLAVGGTLLALL. The Cytoplasmic segment spans residues 734-768; it reads RKRLRKKDDGKCPLNPHSHLGTYGVFTNAAYDPTP. Residue Cys-745 is the site of S-palmitoyl cysteine; alternate attachment. Residue Cys-745 is the site of S-stearoyl cysteine; alternate attachment. The short motif at 756-759 is the Endocytosis signal element; the sequence is YGVF. The segment at 759–768 is interaction with SNX17; it reads FTNAAYDPTP.

The protein belongs to the selectin/LECAM family. As to quaternary structure, interacts with SNX17. Interacts with SELPLG/PSGL1 and PODXL2 and mediates neutrophil adhesion and leukocyte rolling. This interaction requires the sialyl-Lewis X epitope of SELPLG and PODXL2, and specific tyrosine sulfation on SELPLG. Interacts (via C-type lectin domain) with alpha-IIb/beta3 integrin ITGA2B:ITGB3 and alpha-V/beta-3 integrin ITGAV:ITGB3. Interacts with alpha5/beta1 integrin ITGA5:ITGB1 and alpha4/beta1 integrin ITGA4:ITGB. Not detected in the absence of exposure to lipopolysaccharide (LPS). Detected only after exposure to lipopolysaccharide (LPS) in the tissues examined: spleen, lung, brain, liver, heart, kidney, thymus and small intestine.

The protein localises to the cell membrane. Its function is as follows. Ca(2+)-dependent receptor for myeloid cells that binds to carbohydrates on neutrophils and monocytes. Mediates the interaction of activated endothelial cells or platelets with leukocytes. The ligand recognized is sialyl-Lewis X. Mediates rapid rolling of leukocyte rolling over vascular surfaces during the initial steps in inflammation through interaction with SELPLG. Mediates cell-cell interactions and cell adhesion via the interaction with integrin alpha-IIb/beta3 (ITGA2B:ITGB3) and integrin alpha-V/beta-3 (ITGAV:ITGB3). The protein is P-selectin (Selp) of Rattus norvegicus (Rat).